The sequence spans 360 residues: Protein-glutamate methylesterase/protein-glutamine glutaminase 3 (360 aa).

One can recognise a Response regulatory domain in the interval 14–131 (RVLVIDDSAT…AEGVQAYAEE (118 aa)). D65 carries the post-translational modification 4-aspartylphosphate. Residues 169 to 360 (AGKDGRVVAV…AGKLMELDGA (192 aa)) form the CheB-type methylesterase domain. Active-site residues include S181, H207, and D303.

This sequence belongs to the CheB family. In terms of processing, phosphorylated by CheA. Phosphorylation of the N-terminal regulatory domain activates the methylesterase activity.

It is found in the cytoplasm. It carries out the reaction [protein]-L-glutamate 5-O-methyl ester + H2O = L-glutamyl-[protein] + methanol + H(+). It catalyses the reaction L-glutaminyl-[protein] + H2O = L-glutamyl-[protein] + NH4(+). Involved in chemotaxis. Part of a chemotaxis signal transduction system that modulates chemotaxis in response to various stimuli. Catalyzes the demethylation of specific methylglutamate residues introduced into the chemoreceptors (methyl-accepting chemotaxis proteins or MCP) by CheR. Also mediates the irreversible deamidation of specific glutamine residues to glutamic acid. This chain is Protein-glutamate methylesterase/protein-glutamine glutaminase 3, found in Burkholderia thailandensis (strain ATCC 700388 / DSM 13276 / CCUG 48851 / CIP 106301 / E264).